A 268-amino-acid chain; its full sequence is L-aspartate dehydrogenase (268 aa).

NAD(+)-binding residues include Ala125 and Asn191. The active site involves His221.

This sequence belongs to the L-aspartate dehydrogenase family.

The catalysed reaction is L-aspartate + NADP(+) + H2O = oxaloacetate + NH4(+) + NADPH + H(+). The enzyme catalyses L-aspartate + NAD(+) + H2O = oxaloacetate + NH4(+) + NADH + H(+). It functions in the pathway cofactor biosynthesis; NAD(+) biosynthesis; iminoaspartate from L-aspartate (dehydrogenase route): step 1/1. Functionally, specifically catalyzes the NAD or NADP-dependent dehydrogenation of L-aspartate to iminoaspartate. The chain is L-aspartate dehydrogenase from Ralstonia nicotianae (strain ATCC BAA-1114 / GMI1000) (Ralstonia solanacearum).